The following is a 251-amino-acid chain: Malonyl-[acyl-carrier protein] O-methyltransferase (251 aa).

It belongs to the methyltransferase superfamily.

The catalysed reaction is malonyl-[ACP] + S-adenosyl-L-methionine = malonyl-[ACP] methyl ester + S-adenosyl-L-homocysteine. The protein operates within cofactor biosynthesis; biotin biosynthesis. Functionally, converts the free carboxyl group of a malonyl-thioester to its methyl ester by transfer of a methyl group from S-adenosyl-L-methionine (SAM). It allows to synthesize pimeloyl-ACP via the fatty acid synthetic pathway. The polypeptide is Malonyl-[acyl-carrier protein] O-methyltransferase (Enterobacter lignolyticus (strain SCF1)).